A 630-amino-acid chain; its full sequence is tRNA uridine 5-carboxymethylaminomethyl modification enzyme MnmG (630 aa).

Residue 13 to 18 participates in FAD binding; that stretch reads GGGHAG. NAD(+) is bound at residue 273 to 287; it reads GPRYCPSIEDKVMRF.

The protein belongs to the MnmG family. In terms of assembly, homodimer. Heterotetramer of two MnmE and two MnmG subunits. FAD serves as cofactor.

It is found in the cytoplasm. In terms of biological role, NAD-binding protein involved in the addition of a carboxymethylaminomethyl (cmnm) group at the wobble position (U34) of certain tRNAs, forming tRNA-cmnm(5)s(2)U34. In Actinobacillus pleuropneumoniae serotype 5b (strain L20), this protein is tRNA uridine 5-carboxymethylaminomethyl modification enzyme MnmG.